Reading from the N-terminus, the 431-residue chain is Mitochondrial inner membrane protein OXA1-like (431 aa).

The N-terminal 22 residues, 1 to 22 (MATCLRGITKRVNLLQRRVYPS), are a transit peptide targeting the mitochondrion. The next 5 membrane-spanning stretches (helical) occupy residues 119–139 (VVPA…PVAA), 155–175 (WWAS…PILL), 227–247 (FTPL…FFAI), 269–289 (TTTD…LIMV), and 312–332 (IIAF…FCYW). Residues 362 to 414 (NSSTRQPSPSSPLPFSFAEPKDQSVVAQEKPPMSSESSSSVPDRRISRSSVLN) form a disordered region. The segment covering 392–402 (PPMSSESSSSV) has biased composition (low complexity).

This sequence belongs to the OXA1/ALB3/YidC (TC 2.A.9.2) family.

It is found in the mitochondrion inner membrane. Functionally, probably required for the insertion of integral membrane proteins into the mitochondrial inner membrane. May participate in the activity and assembly of cytochrome oxidase. This Arabidopsis thaliana (Mouse-ear cress) protein is Mitochondrial inner membrane protein OXA1-like (OXA1L).